A 549-amino-acid polypeptide reads, in one-letter code: Mitogen-activated protein kinase 15 (549 aa).

The tract at residues 1–20 (MCAAEVDRHVAQRYLIKRRL) is ubiquitin-conjugating. Residues 14–305 (YLIKRRLGKG…AEQALQHPYV (292 aa)) form the Protein kinase domain. ATP is bound by residues 20-28 (LGKGAYGIV) and Lys43. The Proton acceptor role is filled by Asp138. The residue at position 176 (Thr176) is a Phosphothreonine. Residues 176 to 178 (TEY) carry the TXY motif. Tyr178 is subject to Phosphotyrosine. The necessary to interact with ESRRA, to regulate its subcellular localization and to inhibit its transcriptional activity stretch occupies residues 266-286 (LDALLPPDTPPEALDLLKRLL). The interval 301 to 382 (QHPYVQRFHC…ARTQSLKSGV (82 aa)) is requires for interaction with GABARAP, MAP1LC3B AND GABARAPL1. The segment at 370–507 (ASPARTQSLK…PEPRPGRRMF (138 aa)) is disordered. 2 PXXXP motif repeats span residues 380-384 (SGVLP) and 387-391 (PAETP). PXXXP motif; regulates binding with chromatin and interaction with PCNA repeat units follow at residues 395 to 399 (RGPKP) and 403 to 407 (PGHDP). A compositionally biased stretch (basic and acidic residues) spans 403-416 (PGHDPEHVEVRRQS). Omega-N-methylarginine is present on Arg451. Over residues 456-467 (SLTSQAEAQAAN) the composition is skewed to polar residues. A compositionally biased stretch (low complexity) spans 483–492 (AVGARRVPSR). The span at 493-502 (LPREAPEPRP) shows a compositional bias: basic and acidic residues.

This sequence belongs to the protein kinase superfamily. CMGC Ser/Thr protein kinase family. MAP kinase subfamily. As to quaternary structure, interacts with TGFB1I1. Interacts with CSK/c-Src, ABL1 and RET. Interacts with GABARAP, MAP1LC3B and GABARAPL1; controls, in a kinase-dependent fashion, both basal and starvation-induced autophagy. Interacts with ESRRA; promotes re-localization of ESRRA to the cytoplasm through a XPO1-dependent mechanism then inhibits ESRRA transcriptional activity. Interacts with PCNA; the interaction is chromatin binding- and kinase activity-dependent and prevents MDM2-mediated PCNA destruction by inhibiting the association of PCNA with MDM2. Interacts with DVL2. Interacts with CLIC3; MAPK15 does not phosphorylates CLIC3. In terms of processing, autophosphorylated on Thr-176 and Tyr-178; activates the enzyme. Post-translationally, ubiquitinated. Ubiquitination may allow its tight kinase activity regulation and rapid turnover. May be ubiquitinated by a SCF E3 ligase. Expressed at all stages of oocyte meiotic maturation.

It localises to the cytoplasm. It is found in the cytoskeleton. The protein localises to the cilium basal body. The protein resides in the cell junction. Its subcellular location is the tight junction. It localises to the microtubule organizing center. It is found in the centrosome. The protein localises to the centriole. The protein resides in the cytoplasmic vesicle. Its subcellular location is the autophagosome. It localises to the golgi apparatus. It is found in the nucleus. The protein localises to the spindle. The catalysed reaction is L-seryl-[protein] + ATP = O-phospho-L-seryl-[protein] + ADP + H(+). It carries out the reaction L-threonyl-[protein] + ATP = O-phospho-L-threonyl-[protein] + ADP + H(+). Activated by threonine and tyrosine phosphorylation. Inhibited by dual specificity phosphatases, such as DUSP1. Phosphorylation and activation in response to DNA damaging agents, serum stimulation. Constitutively activated when phosphorylated on Tyr-178. Activity depends on the relative rates of MAPK15 autophosphorylation and dephosphorylation by PTPN1. Atypical MAPK protein that regulates several process such as autophagy, ciliogenesis, protein trafficking/secretion and genome integrity, in a kinase activity-dependent manner. Controls both, basal and starvation-induced autophagy throught its interaction with GABARAP, MAP1LC3B and GABARAPL1 leading to autophagosome formation, SQSTM1 degradation and reduced MAP1LC3B inhibitory phosphorylation. Regulates primary cilium formation and the localization of ciliary proteins involved in cilium structure, transport, and signaling. Prevents the relocation of the sugar-adding enzymes from the Golgi to the endoplasmic reticulum, thereby restricting the production of sugar-coated proteins. Upon amino-acid starvation, mediates transitional endoplasmic reticulum site disassembly and inhibition of secretion. Binds to chromatin leading to MAPK15 activation and interaction with PCNA, that which protects genomic integrity by inhibiting MDM2-mediated degradation of PCNA. Regulates DA transporter (DAT) activity and protein expression via activation of RhoA. In response to H(2)O(2) treatment phosphorylates ELAVL1, thus preventing it from binding to the PDCD4 3'UTR and rendering the PDCD4 mRNA accessible to miR-21 and leading to its degradation and loss of protein expression. Also functions in a kinase activity-independent manner as a negative regulator of growth. Phosphorylates in vitro FOS and MBP. During oocyte maturation, plays a key role in the microtubule organization and meiotic cell cycle progression in oocytes, fertilized eggs, and early embryos. Interacts with ESRRA promoting its re-localization from the nucleus to the cytoplasm and then prevents its transcriptional activity. This Mus musculus (Mouse) protein is Mitogen-activated protein kinase 15.